Consider the following 322-residue polypeptide: Outer membrane protein assembly factor BamC (322 aa).

A signal peptide spans 1–22 (MISLLAVAVLAGCSNPETRSQA).

It belongs to the BamC family. As to quaternary structure, part of the Bam complex.

Its subcellular location is the cell outer membrane. Functionally, part of the outer membrane protein assembly complex, which is involved in assembly and insertion of beta-barrel proteins into the outer membrane. This chain is Outer membrane protein assembly factor BamC, found in Oceanimonas sp. (strain GK1 / IBRC-M 10197).